The primary structure comprises 1246 residues: Zinc finger protein 687a (1246 aa).

The span at 24 to 47 (KEAIQSDTHGNHNEHSSVVGKERS) shows a compositional bias: basic and acidic residues. The disordered stretch occupies residues 24-387 (KEAIQSDTHG…PTLVESASDA (364 aa)). Polar residues-rich tracts occupy residues 88-111 (GEFSSADESQKSPQKGPSKDSSVP) and 163-195 (AFTNHPASTFQSLPLSNHPSVSSHLISPNFSSK). A compositionally biased stretch (low complexity) spans 287–301 (SSTNPTSLTSTNNLP). The segment covering 302–317 (VEEKDLEHIIEERDSP) has biased composition (basic and acidic residues). Positions 326–338 (QSRTSLPSNSQGA) are enriched in polar residues. Composition is skewed to basic and acidic residues over residues 341-350 (SKQRITREEA) and 360-375 (MQEKVDYGAEATEGKS). The segment at 587 to 619 (YRCLECGDAFALERSLARHYDRRSMRIEVTCNH) adopts a C2H2-type 1 zinc-finger fold. A C2H2-type 2; degenerate zinc finger spans residues 696-719 (HSCPECWSTFKGKQELVAHFQEVE). 3 C2H2-type zinc fingers span residues 817–840 (HKCPSCPMAFKSSSGAESHCASQH), 854–876 (YKCVMCRTVFTQKSLLSVHIDTH), and 885–908 (FKCPDCNKLFTQRTSLLEHVKDTH). A disordered region spans residues 907–953 (THRETSNHDGTSTQNSLVKMESSDGEEWGRDEEEDKGKVSDANSAVP). Residues 914 to 923 (HDGTSTQNSL) are compositionally biased toward polar residues. Residues 929-940 (SDGEEWGRDEEE) show a composition bias toward acidic residues. C2H2-type zinc fingers lie at residues 958–981 (WSCSQCQTHYTDKENYISHMTEQH) and 988–1011 (FPCTLCEGSFSSSSSLRRHIRVKH). A C2H2-type 8; degenerate zinc finger spans residues 1018–1044 (FYCQLCTGEKRSFSSKLILEKHIQAQH). Positions 1045–1093 (AGERGTATQSQAVPQFTDGADSSSEHDAGVLGGSSVEPESRLAESTLTR) are disordered. 2 consecutive C2H2-type zinc fingers follow at residues 1137 to 1160 (AQCQQCGACFASSSSLSRHLFISH) and 1210 to 1232 (HICKVCGRYFSKPADLNTHFRTH).

This sequence belongs to the krueppel C2H2-type zinc-finger protein family. As to expression, widely expressed with highest levels in kidney, spleen and ovary.

Its subcellular location is the nucleus. Its function is as follows. May be involved in transcriptional regulation. In Danio rerio (Zebrafish), this protein is Zinc finger protein 687a (znf687a).